Reading from the N-terminus, the 209-residue chain is Ribosomal RNA small subunit methyltransferase G (209 aa).

Residues glycine 71, phenylalanine 76, 122-123, and arginine 135 contribute to the S-adenosyl-L-methionine site; that span reads AE.

Belongs to the methyltransferase superfamily. RNA methyltransferase RsmG family.

The protein resides in the cytoplasm. In terms of biological role, specifically methylates the N7 position of a guanine in 16S rRNA. This Phocaeicola vulgatus (strain ATCC 8482 / DSM 1447 / JCM 5826 / CCUG 4940 / NBRC 14291 / NCTC 11154) (Bacteroides vulgatus) protein is Ribosomal RNA small subunit methyltransferase G.